We begin with the raw amino-acid sequence, 80 residues long: RNA-binding protein Hfq (80 aa).

A Sm domain is found at 10 to 70; sequence DLFLNTVRKQ…ISTIMPGQPM (61 aa).

Belongs to the Hfq family. Homohexamer.

Functionally, RNA chaperone that binds small regulatory RNA (sRNAs) and mRNAs to facilitate mRNA translational regulation in response to envelope stress, environmental stress and changes in metabolite concentrations. Also binds with high specificity to tRNAs. The polypeptide is RNA-binding protein Hfq (Rhizobium etli (strain CIAT 652)).